The primary structure comprises 105 residues: Large ribosomal subunit protein uL24 (105 aa).

This sequence belongs to the universal ribosomal protein uL24 family. As to quaternary structure, part of the 50S ribosomal subunit.

In terms of biological role, one of two assembly initiator proteins, it binds directly to the 5'-end of the 23S rRNA, where it nucleates assembly of the 50S subunit. Its function is as follows. One of the proteins that surrounds the polypeptide exit tunnel on the outside of the subunit. In Psychrobacter cryohalolentis (strain ATCC BAA-1226 / DSM 17306 / VKM B-2378 / K5), this protein is Large ribosomal subunit protein uL24.